Consider the following 420-residue polypeptide: Gamma-glutamyl phosphate reductase (420 aa).

This sequence belongs to the gamma-glutamyl phosphate reductase family.

Its subcellular location is the cytoplasm. It carries out the reaction L-glutamate 5-semialdehyde + phosphate + NADP(+) = L-glutamyl 5-phosphate + NADPH + H(+). It functions in the pathway amino-acid biosynthesis; L-proline biosynthesis; L-glutamate 5-semialdehyde from L-glutamate: step 2/2. In terms of biological role, catalyzes the NADPH-dependent reduction of L-glutamate 5-phosphate into L-glutamate 5-semialdehyde and phosphate. The product spontaneously undergoes cyclization to form 1-pyrroline-5-carboxylate. This is Gamma-glutamyl phosphate reductase from Shewanella amazonensis (strain ATCC BAA-1098 / SB2B).